Consider the following 205-residue polypeptide: Arginine exporter protein ArgO (205 aa).

The next 6 helical transmembrane spans lie at 1–21, 42–62, 67–87, 111–131, 147–167, and 182–202; these read MLAV…PLGP, LCAL…SALL, LLLA…GWGA, IIVT…DTFV, WFAF…ALLA, and VINL…ARQG.

The protein belongs to the LysE/ArgO transporter (TC 2.A.75) family.

Its subcellular location is the cell inner membrane. It carries out the reaction L-arginine(in) = L-arginine(out). Its function is as follows. Involved in the export of arginine. Important to control the intracellular level of arginine and the correct balance between arginine and lysine. The polypeptide is Arginine exporter protein ArgO (Yersinia enterocolitica serotype O:8 / biotype 1B (strain NCTC 13174 / 8081)).